The primary structure comprises 289 residues: Oxaloacetate decarboxylase (289 aa).

Serine 47 provides a ligand contact to substrate. Aspartate 85 lines the Mg(2+) pocket. Residues arginine 156 and histidine 232 each contribute to the substrate site.

Belongs to the isocitrate lyase/PEP mutase superfamily. Oxaloacetate decarboxylase family. Homotetramer; dimer of dimers. Mg(2+) serves as cofactor.

The catalysed reaction is oxaloacetate + H(+) = pyruvate + CO2. In terms of biological role, catalyzes the decarboxylation of oxaloacetate into pyruvate. Seems to play a role in maintaining cellular concentrations of bicarbonate and pyruvate. This Rhodopseudomonas palustris (strain BisA53) protein is Oxaloacetate decarboxylase.